Consider the following 204-residue polypeptide: Dual-action ribosomal maturation protein DarP (204 aa).

2 disordered regions span residues 1-31 (MPPMTRKTRIQPIEPVAEEDDNGYDRPSKSQ) and 182-204 (GGASDSDDEAADDAGDDHDDDEA). Residues 186–204 (DSDDEAADDAGDDHDDDEA) show a composition bias toward acidic residues.

The protein belongs to the DarP family.

It localises to the cytoplasm. In terms of biological role, member of a network of 50S ribosomal subunit biogenesis factors which assembles along the 30S-50S interface, preventing incorrect 23S rRNA structures from forming. Promotes peptidyl transferase center (PTC) maturation. This Burkholderia orbicola (strain MC0-3) protein is Dual-action ribosomal maturation protein DarP.